Here is a 226-residue protein sequence, read N- to C-terminus: UPF0173 metal-dependent hydrolase CHY_0920 (226 aa).

Belongs to the UPF0173 family.

This Carboxydothermus hydrogenoformans (strain ATCC BAA-161 / DSM 6008 / Z-2901) protein is UPF0173 metal-dependent hydrolase CHY_0920.